Consider the following 196-residue polypeptide: uncharacterized protein (196 aa).

A helical transmembrane segment spans residues 26–46; that stretch reads ITFFFILLICFICILLLLAIF.

The protein localises to the membrane. This is an uncharacterized protein from Mus musculus (Mouse).